Here is a 185-residue protein sequence, read N- to C-terminus: Ribosome-recycling factor (185 aa).

It belongs to the RRF family.

The protein localises to the cytoplasm. Its function is as follows. Responsible for the release of ribosomes from messenger RNA at the termination of protein biosynthesis. May increase the efficiency of translation by recycling ribosomes from one round of translation to another. This Thermus thermophilus (strain ATCC BAA-163 / DSM 7039 / HB27) protein is Ribosome-recycling factor.